We begin with the raw amino-acid sequence, 92 residues long: Defensin-like protein 96 (92 aa).

The signal sequence occupies residues 1–29 (MGSLRLSTVAIAVVVCLSILLISPTEVDG). 4 cysteine pairs are disulfide-bonded: Cys33–Cys80, Cys40–Cys65, Cys49–Cys77, and Cys53–Cys79.

This sequence belongs to the DEFL family.

The protein localises to the secreted. This Arabidopsis thaliana (Mouse-ear cress) protein is Defensin-like protein 96.